Consider the following 1275-residue polypeptide: Histone-lysine N-methyltransferase PRDM16 (1275 aa).

The segment covering M1–L10 has biased composition (basic residues). The tract at residues M1 to S66 is disordered. Residues P82 to K211 enclose the SET domain. The C2H2-type 1; degenerate zinc finger occupies F230 to S255. 5 consecutive C2H2-type zinc fingers follow at residues H282–H304, Y310–H332, F338–H361, H367–H389, and F395–H417. Residues I424–C446 form a C2H2-type 7; atypical zinc finger. 2 disordered regions span residues V592–G658 and A789–E838. The span at T610 to D625 shows a compositional bias: low complexity. Basic and acidic residues-rich tracts occupy residues D631–P648 and R821–G835. The segment at E680–S1038 is interaction with CTBP1, CTBP2 and ZNF516. The interval P740–L1275 is mediates interaction with SKI and regulation of TGF-beta signaling. 3 consecutive C2H2-type zinc fingers follow at residues Y951–H973, Y979–H1002, and F1008–H1030. Disordered stretches follow at residues L1027–L1065 and E1084–D1169. A compositionally biased stretch (polar residues) spans S1038–E1058. The span at D1117–S1133 shows a compositional bias: acidic residues.

The protein belongs to the PRDM16 family. Interacts with CEBPA, CEBPB and CEBPD; the interaction is direct. Interacts with PPARG and PPARA; controls brown adipocytes. Interacts with CTBP1 and CTBP2; represses the expression of WAT-specific genes. Interacts with PPARGC1A and PPARGC1B; interaction with PPARGC1A or PPARGC1B activates the transcription of BAT-specific gene. Interacts with HDAC1, SKI and SMAD2; the interaction with SKI promotes the recruitment of SMAD3-HDAC1 complex on the promoter of TGF-beta target genes. Interacts with ZNF516; the interaction is direct and may play a role in the transcription of brown adipose tissue-specific gene. In terms of tissue distribution, enriched in BAT compared to WAT. Detected in heart, lung, kidney and brain. Expressed in nuclei of cardiomyocytes.

The protein localises to the nucleus. Its subcellular location is the cytoplasm. The enzyme catalyses L-lysyl(9)-[histone H3] + S-adenosyl-L-methionine = N(6)-methyl-L-lysyl(9)-[histone H3] + S-adenosyl-L-homocysteine + H(+). Functionally, binds DNA and functions as a transcriptional regulator. Displays histone methyltransferase activity and monomethylates 'Lys-9' of histone H3 (H3K9me1) in vitro. Probably catalyzes the monomethylation of free histone H3 in the cytoplasm which is then transported to the nucleus and incorporated into nucleosomes where SUV39H methyltransferases use it as a substrate to catalyze histone H3 'Lys-9' trimethylation. Likely to be one of the primary histone methyltransferases along with MECOM/PRDM3 that direct cytoplasmic H3K9me1 methylation. Functions in the differentiation of brown adipose tissue (BAT) which is specialized in dissipating chemical energy in the form of heat in response to cold or excess feeding while white adipose tissue (WAT) is specialized in the storage of excess energy and the control of systemic metabolism. Together with CEBPB, regulates the differentiation of myoblastic precursors into brown adipose cells. Functions as a repressor of TGF-beta signaling. This is Histone-lysine N-methyltransferase PRDM16 from Mus musculus (Mouse).